A 442-amino-acid polypeptide reads, in one-letter code: Thymidine phosphorylase (442 aa).

Belongs to the thymidine/pyrimidine-nucleoside phosphorylase family. Homodimer.

It carries out the reaction thymidine + phosphate = 2-deoxy-alpha-D-ribose 1-phosphate + thymine. It participates in pyrimidine metabolism; dTMP biosynthesis via salvage pathway; dTMP from thymine: step 1/2. Its function is as follows. The enzymes which catalyze the reversible phosphorolysis of pyrimidine nucleosides are involved in the degradation of these compounds and in their utilization as carbon and energy sources, or in the rescue of pyrimidine bases for nucleotide synthesis. The chain is Thymidine phosphorylase from Vibrio vulnificus (strain CMCP6).